We begin with the raw amino-acid sequence, 248 residues long: Ethylene-responsive transcription factor ERF026 (248 aa).

Residues V89–P145 constitute a DNA-binding region (AP2/ERF). Residues P225–Y248 form a disordered region.

This sequence belongs to the AP2/ERF transcription factor family. ERF subfamily.

Its subcellular location is the nucleus. In terms of biological role, probably acts as a transcriptional activator. Binds to the GCC-box pathogenesis-related promoter element. May be involved in the regulation of gene expression by stress factors and by components of stress signal transduction pathways. This Arabidopsis thaliana (Mouse-ear cress) protein is Ethylene-responsive transcription factor ERF026 (ERF026).